The sequence spans 575 residues: Preprotein translocase subunit SCY2, chloroplastic (575 aa).

The transit peptide at 1–34 (MNSSQACFFHFSLRPISLSHPSYAFLSKRDPFLC) directs the protein to the chloroplast. The next 10 helical transmembrane spans lie at 157–177 (FVTAVLLVLSRVGYFIPLPGF), 206–226 (LSLFQLGLSPQIIASIIMQVL), 251–271 (IWWLSFFFAIVEALVVAYTSL), 285–305 (VMMTSSLLVCGAMTMTWLCDT), 306–326 (ISESGFGHGSSLIICVGILTG), 346–366 (LPYLLGLLGIFTVVTMFAVVV), 414–434 (TTYLLAFPSILASILGSPFLL), 447–467 (GAPPWVYYSIYAFFVFLFNIF), 509–529 (FWGGLLLSFLATASTVLDHYL), and 531–551 (SINQGFSIGFTSVLIIVGSII).

Belongs to the SecY/SEC61-alpha family. As to quaternary structure, part of a second Sec protein translocation apparatus. Interacts probably with SECA2. As to expression, ubiquitous.

The protein resides in the plastid. It localises to the chloroplast membrane. The protein localises to the amyloplast membrane. Its subcellular location is the chloroplast thylakoid membrane. Functionally, involved in protein export. Probably interacts with other proteins to allow the postimport or conservative sorting pathway for inner membrane proteins in plastids. Central subunit of the protein translocation channel SecYE. Consists of two halves formed by TMs 1-5 and 6-10. These two domains form a lateral gate at the front which open onto the bilayer between TMs 2 and 7, and are clamped together by SecE at the back. The channel is closed by both a pore ring composed of hydrophobic SecY resides and a short helix (helix 2A) on the extracellular side of the membrane which forms a plug. The polypeptide is Preprotein translocase subunit SCY2, chloroplastic (SCY2) (Arabidopsis thaliana (Mouse-ear cress)).